The following is a 146-amino-acid chain: Protein PBDC1 homolog (146 aa).

The protein belongs to the PBDC1 family.

The protein localises to the cytoplasm. The sequence is that of Protein PBDC1 homolog from Saccharomyces cerevisiae (strain ATCC 204508 / S288c) (Baker's yeast).